Reading from the N-terminus, the 508-residue chain is MELYLNMLSFWYILLATSFFGPSQAVYQAPLSVDESQKVTIEEGFQIFTSKHSPQHSIRIKKQDGSICDAHSAQYTGWLDIGPKHLFFWYFESQNDPENDPLTLWMTGGPGYSSMLGMLEEVGPCLVNEYGNGTKYNPWGWSKKSSMLFVDQPVGVGFSYGDEGHDIPNDSYLAAVDMHRFLQLFISEVFPNKLNSPFHISGESYGGHYIPYLGAQIVRQNKLYPNEPQVQLKSCLIGNGCMSHMHTTFGYWETLCTTNPGVEKPIFNETRCDIMAKNMPRCMKVAEVCRRNPDPAICLSAQSVCDEGITGLYNKESDVKGGRNRFDITTPCQADDICYVQGLHLQNYLNTKLVWDALSPPKEVKEYKFASKNVEHAFGLTSDSMVPSTEEVEFLLSNQIHIMSYQGNLDLACNTAGNLKWMHDIPWKGQAELSSKALVPWKSVLASTGKNETVGRMKEVKIRVTDSATFATRYAFVTVDNAGHMVPQDRPDVAFDLMNRWISGETFV.

An N-terminal signal peptide occupies residues methionine 1–alanine 25. Residues asparagine 132 and asparagine 169 are each glycosylated (N-linked (GlcNAc...) asparagine). Serine 204 is a catalytic residue. Residue asparagine 268 is glycosylated (N-linked (GlcNAc...) asparagine). 3 disulfide bridges follow: cysteine 282–cysteine 305, cysteine 289–cysteine 298, and cysteine 332–cysteine 338. Aspartate 410 is a catalytic residue. Cysteine 413 is a substrate binding site. N-linked (GlcNAc...) asparagine glycosylation is present at asparagine 451. Residue histidine 484 is part of the active site. Methionine 485 provides a ligand contact to substrate.

Belongs to the peptidase S10 family.

It localises to the secreted. The catalysed reaction is Release of a C-terminal amino acid with broad specificity.. Functionally, involved in degradation of small peptides. This is Carboxypeptidase Y homolog ARB_05721 from Arthroderma benhamiae (strain ATCC MYA-4681 / CBS 112371) (Trichophyton mentagrophytes).